A 106-amino-acid chain; its full sequence is Testis-specific basic protein Y 2 (106 aa).

It belongs to the VCX/VCY family. As to quaternary structure, interacts with MAP1S. Interacts with UBE3A (via HECT domain). As to expression, expressed exclusively in testis. Expressed in ejaculated spermatozoa of germ cell. Expressed in the nuclei of spermatogonia, spermatocytes, and round spermatids, except elongated spermatids (at protein level).

The sequence is that of Testis-specific basic protein Y 2 (BPY2) from Homo sapiens (Human).